Consider the following 1190-residue polypeptide: Pumilio homolog 1 (1190 aa).

4 disordered regions span residues 38–74 (LTSG…GVAG), 491–531 (SNSA…QQTD), 611–675 (ANGP…NSSL), and 744–777 (GPVG…LNLG). Composition is skewed to low complexity over residues 491 to 508 (SNSA…GQQQ), 518 to 531 (PLTP…QQTD), 628 to 675 (QQPQ…NSSL), and 765 to 777 (LSSH…LNLG). In terms of domain architecture, PUM-HD spans 830 to 1172 (GRSRLLEDFR…HILAKLEKYY (343 aa)). 8 Pumilio repeats span residues 850–885 (EIAG…LVFN), 886–921 (EILQ…ALAE), 922–959 (RIRG…EMVR), 960–995 (ELDG…FIID), 996–1031 (AFKS…PILE), 1032–1067 (ELHQ…KIVA), 1068–1103 (EIRG…MLID), and 1107–1146 (TMND…IVMH). The adenine-nucleotide binding in RNA target stretch occupies residues 865–869 (SRFIQ). The uracil-nucleotide binding in RNA target stretch occupies residues 901 to 905 (NYVIQ). Residues 937–941 (CRVIQ) form an adenine-nucleotide binding in RNA target region. Positions 975–979 (NHVVQ) are non-specific-nucleotide binding in RNA target. The interval 1011–1015 (CRVIQ) is adenine-nucleotide binding in RNA target. The uracil-nucleotide binding in RNA target stretch occupies residues 1047–1051 (NYVIQ). A guanine-nucleotide binding in RNA target region spans residues 1083 to 1087 (SNVVE). The interval 1126–1130 (NYVVQ) is uracil-nucleotide binding in RNA target.

As to quaternary structure, interacts with cpeb1-a; interacts with unphosphorylated cpeb1-a but not phosphorylated. Component of a complex with papd4, sympk, tacc3, parn, dazl and cpeb1. In terms of processing, phosphorylated. Phosphorylation takes place at the time of dissociation of cpeb1-a from pum1 and the translational activation of ccnb1 mRNA. Present in oocytes (at protein level).

The protein localises to the cytoplasm. It is found in the P-body. The protein resides in the cytoplasmic granule. Its function is as follows. Sequence-specific RNA-binding protein that acts as a post-transcriptional repressor by binding the 3'-UTR of mRNA targets. Binds to an RNA consensus sequence, the Pumilio Response Element (PRE), 5'-UGUANAUA-3', that is related to the Nanos Response Element (NRE). Mediates post-transcriptional repression of transcripts via different mechanisms: acts via direct recruitment of deadenylase complexes leading to translational inhibition and mRNA degradation. Also mediates deadenylation-independent repression by promoting accessibility of miRNAs. Acts as a post-transcriptional repressor of ccnb1 mRNA during oocyte maturation. The sequence is that of Pumilio homolog 1 from Xenopus laevis (African clawed frog).